Consider the following 1525-residue polypeptide: Multidrug resistance-associated protein 1 (1525 aa).

Residues 1 to 33 (MGIESLCSADASEPFWDWNLTWHTENPDFTQCF) lie on the Extracellular side of the membrane. The chain crosses the membrane as a helical span at residues 34–54 (QNTVLVWVPCIYLWVCFPAYF). Residues 55 to 74 (LYLRSHDRGYIQMSILNKAK) are Cytoplasmic-facing. A helical membrane pass occupies residues 75 to 95 (TALGLILWIVCWADLFYSFWE). Residues 96 to 100 (RSQNI) lie on the Extracellular side of the membrane. The chain crosses the membrane as a helical span at residues 101 to 121 (FRAPFFLISPTVLGITMLLAT). Topologically, residues 122-133 (FLIQHERLKGVQ) are cytoplasmic. A helical transmembrane segment spans residues 134–154 (SSGVMMIFWLISLLCATVIFR). At 155 to 172 (SKIMLALNTDTEVDAFRY) the chain is on the extracellular side. A helical membrane pass occupies residues 173–193 (VTFCTYFILLLVQLILSCFPE). Residues 194–315 (KPPLFSEAVN…RSSEASLSKV (122 aa)) are Cytoplasmic-facing. The helical transmembrane segment at 316-336 (LYKTFGPYFLMSFLFKAAHDL) threads the bilayer. One can recognise an ABC transmembrane type-1 1 domain in the interval 324–607 (FLMSFLFKAA…LPMVISSIVE (284 aa)). Topologically, residues 337–362 (LMFTGPEILKLLINFVNNKSAPNWQG) are extracellular. A helical membrane pass occupies residues 363-383 (YFYTGLLFVCACLQTLILHQY). The Cytoplasmic segment spans residues 384–439 (FHICFVTGMRLKTAIVGVIYRKALVITNSARKTSTVGEIVNLMSVDAQRFMDLATY). A helical membrane pass occupies residues 440 to 460 (INMIWSAPLQVILALYLLWRN). The Extracellular segment spans residues 461-463 (LGP). A helical membrane pass occupies residues 464-484 (SVLAGVAVMILLVPINAVMAM). Residues 485–546 (KTKTYQVAQM…VLKKSAYLAA (62 aa)) lie on the Cytoplasmic side of the membrane. A helical membrane pass occupies residues 547–567 (MGTFTWVCAPFLVALSTFAVY). At 568–589 (VKVNKNNILDAQKAFVSLALFN) the chain is on the extracellular side. Residues 590-610 (ILRFPLNILPMVISSIVEASV) form a helical membrane-spanning segment. Topologically, residues 611–961 (SLKRLRVFLS…VKATVYWEYM (351 aa)) are cytoplasmic. Positions 641 to 865 (IVVKNATFSW…DGAFAEFLRT (225 aa)) constitute an ABC transporter 1 domain. An ATP-binding site is contributed by 675–682 (GQVGCGKS). Composition is skewed to polar residues over residues 871–882 (QSMESSDASSPS) and 908–928 (SNSS…STAE). Disordered regions lie at residues 871–891 (QSME…PVEN) and 908–930 (SNSS…AELQ). Residues 962-982 (KAIGLYISFLSVFLFMCNHIA) form a helical membrane-spanning segment. The region spanning 969-1250 (SFLSVFLFMC…LVRMTSDLET (282 aa)) is the ABC transmembrane type-1 2 domain. The Extracellular segment spans residues 983–1019 (SLASNYWLSLWTDDPVVNGTQQYTNVRLGVYGALGIS). Residues 1020–1040 (QGIAVFGYSMAVSIGGIFASR) form a helical membrane-spanning segment. At 1041 to 1083 (HLHLDLLHNVLRSPMSFFERTPSGNLVSRFSKEIDTIDSTIPP) the chain is on the cytoplasmic side. The helical transmembrane segment at 1084–1104 (IIKMFMGSTFNVIGACIIILL) threads the bilayer. A topological domain (extracellular) is located at residue Ala1105. The chain crosses the membrane as a helical span at residues 1106 to 1126 (TPIAAVVIPPLGLVYLLVQRF). At 1127 to 1197 (YVATSRQLKR…VANRWLAVRL (71 aa)) the chain is on the cytoplasmic side. Residues 1198-1218 (EFVGNCIVLFAALFAVIARNK) form a helical membrane-spanning segment. Residues 1219–1220 (LS) are Extracellular-facing. Residues 1221 to 1241 (PGLIGLSVSYSLQITAYLNWL) form a helical membrane-spanning segment. The Cytoplasmic segment spans residues 1242–1525 (VRMTSDLETN…YSMAKDSGLA (284 aa)). In terms of domain architecture, ABC transporter 2 spans 1289–1521 (FRGFGLRYRE…KGLFYSMAKD (233 aa)). Residue 1321–1328 (GRTGAGKS) coordinates ATP.

It belongs to the ABC transporter superfamily. ABCC family. Conjugate transporter (TC 3.A.1.208) subfamily.

The protein localises to the cell membrane. The enzyme catalyses ATP + H2O + xenobioticSide 1 = ADP + phosphate + xenobioticSide 2.. It catalyses the reaction an S-substituted glutathione(in) + ATP + H2O = an S-substituted glutathione(out) + ADP + phosphate + H(+). The catalysed reaction is sphing-4-enine 1-phosphate(in) + ATP + H2O = sphing-4-enine 1-phosphate(out) + ADP + phosphate + H(+). It carries out the reaction leukotriene C4(in) + ATP + H2O = leukotriene C4(out) + ADP + phosphate + H(+). The enzyme catalyses 17beta-estradiol 17-O-(beta-D-glucuronate)(in) + ATP + H2O = 17beta-estradiol 17-O-(beta-D-glucuronate)(out) + ADP + phosphate + H(+). It catalyses the reaction 2',3'-cGAMP(in) + ATP + H2O = 2',3'-cGAMP(out) + ADP + phosphate + H(+). Mediates export of organic anions and drugs from the cytoplasm. Mediates ATP-dependent transport of glutathione and glutathione conjugates, leukotriene C4, estradiol-17-beta-o-glucuronide and other xenobiotics. Hydrolyzes ATP with low efficiency. Mediates ATP-dependent, GSH-independent cyclic GMP-AMP (cGAMP) export. Thus, by limiting intracellular cGAMP concentrations negatively regulates the cGAS-STING pathway. This is Multidrug resistance-associated protein 1 from Gallus gallus (Chicken).